A 389-amino-acid polypeptide reads, in one-letter code: Cytochrome b (389 aa).

The next 8 membrane-spanning stretches (helical) occupy residues 32-52 (FGFF…LLAM), 76-98 (WLLR…IHML), 113-133 (LWVS…LGYV), 179-199 (FFSL…LHII), 225-245 (FTIK…TFVF), 290-310 (LGVL…FLTI), 325-345 (LFWS…QPAA), and 353-373 (LYST…IYIV). Heme b-binding residues include His82 and His96. Heme b-binding residues include His183 and His197.

This sequence belongs to the cytochrome b family. As to quaternary structure, the main subunits of complex b-c1 are: cytochrome b, cytochrome c1 and the Rieske protein. The cofactor is heme b.

It is found in the mitochondrion inner membrane. Its function is as follows. Component of the ubiquinol-cytochrome c reductase complex (complex III or cytochrome b-c1 complex) that is part of the mitochondrial respiratory chain. The b-c1 complex mediates electron transfer from ubiquinol to cytochrome c. Contributes to the generation of a proton gradient across the mitochondrial membrane that is then used for ATP synthesis. The protein is Cytochrome b (cytB) of Dictyostelium discoideum (Social amoeba).